We begin with the raw amino-acid sequence, 291 residues long: Taste receptor type 2 member 16 (291 aa).

Position 1 (methionine 1) is a topological domain, extracellular. A helical transmembrane segment spans residues 2–22 (IPIQLTVFFMIIYVLESLTII). The Cytoplasmic portion of the chain corresponds to 23–41 (VQSSLIVAVLGREWLQVRR). A helical transmembrane segment spans residues 42-62 (LMPVDMILISLGISRFCLQWA). Topologically, residues 63–84 (SMLNNFCSYFNLNYVLCNLTIT) are extracellular. Residue asparagine 80 is glycosylated (N-linked (GlcNAc...) asparagine). Residues 85–105 (WEFFNILTFWLNSLLTVFYCI) form a helical membrane-spanning segment. Residues 106–125 (KVSSFTHHIFLWLRWRILRL) lie on the Cytoplasmic side of the membrane. Residues 126-146 (FPWILLGSLMITCVTIIPSAI) form a helical membrane-spanning segment. At 147-182 (GNYIQIQLLTMEHLPRNSTVTDKLEKFHQYQFQAHT) the chain is on the extracellular side. Asparagine 163 carries N-linked (GlcNAc...) asparagine glycosylation. Residues 183–203 (VALVIPFILFLASTILLMASL) form a helical membrane-spanning segment. The Cytoplasmic portion of the chain corresponds to 204 to 228 (TKQIQHHSTGHCNPSMKAHFTALRS). Residues 229–249 (LAVLFIVFTSYFLTILITIIG) form a helical membrane-spanning segment. Residues 250–257 (TLFDKRCW) lie on the Extracellular side of the membrane. Residues 258 to 278 (LWVWEAFVYAFILMHSTSLML) traverse the membrane as a helical segment. Residues 279-291 (SSPTLKRILKGKC) are Cytoplasmic-facing.

Belongs to the G-protein coupled receptor T2R family. As to quaternary structure, interacts with RTP3 and RTP4.

Its subcellular location is the cell membrane. Receptor that may play a role in the perception of bitterness and is gustducin-linked. May play a role in sensing the chemical composition of the gastrointestinal content. The activity of this receptor may stimulate alpha gustducin, mediate PLC-beta-2 activation and lead to the gating of TRPM5. The chain is Taste receptor type 2 member 16 (TAS2R16) from Pan troglodytes (Chimpanzee).